Here is a 146-residue protein sequence, read N- to C-terminus: Hemoglobin subunit beta (146 aa).

Val1 carries the post-translational modification N-acetylvaline. In terms of domain architecture, Globin spans 2–146 (HLTPEEKSAV…VANALAHKYH (145 aa)). Thr12 is modified (phosphothreonine). Ser44 carries the phosphoserine modification. At Lys59 the chain carries N6-acetyllysine. His63 is a binding site for heme b. Lys82 carries the N6-acetyllysine modification. His92 contributes to the heme b binding site. Cys93 is subject to S-nitrosocysteine. At Lys144 the chain carries N6-acetyllysine.

The protein belongs to the globin family. Heterotetramer of two alpha chains and two beta chains. Red blood cells.

Involved in oxygen transport from the lung to the various peripheral tissues. In Hylobates lar (Lar gibbon), this protein is Hemoglobin subunit beta (HBB).